Here is a 1399-residue protein sequence, read N- to C-terminus: DNA-directed RNA polymerase subunit beta' (1399 aa).

Residues Cys70, Cys72, Cys85, and Cys88 each contribute to the Zn(2+) site. Residues Asp460, Asp462, and Asp464 each contribute to the Mg(2+) site. Zn(2+)-binding residues include Cys814, Cys888, Cys895, and Cys898.

This sequence belongs to the RNA polymerase beta' chain family. The RNAP catalytic core consists of 2 alpha, 1 beta, 1 beta' and 1 omega subunit. When a sigma factor is associated with the core the holoenzyme is formed, which can initiate transcription. It depends on Mg(2+) as a cofactor. Requires Zn(2+) as cofactor.

The enzyme catalyses RNA(n) + a ribonucleoside 5'-triphosphate = RNA(n+1) + diphosphate. In terms of biological role, DNA-dependent RNA polymerase catalyzes the transcription of DNA into RNA using the four ribonucleoside triphosphates as substrates. The polypeptide is DNA-directed RNA polymerase subunit beta' (Pseudomonas putida (strain ATCC 700007 / DSM 6899 / JCM 31910 / BCRC 17059 / LMG 24140 / F1)).